Reading from the N-terminus, the 45-residue chain is uncharacterized protein (45 aa).

Residues 2–25 (YQCLRCGGIFNKRREVVEHLLVGH) form a C2H2-type zinc finger.

This is an uncharacterized protein from Sulfolobus spindle-shape virus 1 (SSV1).